The sequence spans 107 residues: Large ribosomal subunit protein P2 (107 aa).

Positions 86–107 (PAAAAAEAEEEDDDDMGFGLFD) are disordered. A compositionally biased stretch (acidic residues) spans 92-101 (EAEEEDDDDM).

It belongs to the eukaryotic ribosomal protein P1/P2 family. P1 and P2 exist as dimers at the large ribosomal subunit. Post-translationally, phosphorylated.

Its function is as follows. Plays an important role in the elongation step of protein synthesis. This chain is Large ribosomal subunit protein P2, found in Trypanosoma brucei brucei.